The chain runs to 373 residues: Beta sliding clamp (373 aa).

It belongs to the beta sliding clamp family. In terms of assembly, forms a ring-shaped head-to-tail homodimer around DNA which binds and tethers DNA polymerases and other proteins to the DNA. The DNA replisome complex has a single clamp-loading complex (3 tau and 1 each of delta, delta', psi and chi subunits) which binds 3 Pol III cores (1 core on the leading strand and 2 on the lagging strand) each with a beta sliding clamp dimer. Additional proteins in the replisome are other copies of gamma, psi and chi, Ssb, DNA helicase and RNA primase.

It localises to the cytoplasm. Functionally, confers DNA tethering and processivity to DNA polymerases and other proteins. Acts as a clamp, forming a ring around DNA (a reaction catalyzed by the clamp-loading complex) which diffuses in an ATP-independent manner freely and bidirectionally along dsDNA. Initially characterized for its ability to contact the catalytic subunit of DNA polymerase III (Pol III), a complex, multichain enzyme responsible for most of the replicative synthesis in bacteria; Pol III exhibits 3'-5' exonuclease proofreading activity. The beta chain is required for initiation of replication as well as for processivity of DNA replication. The chain is Beta sliding clamp (dnaN) from Mycoplasmopsis pulmonis (strain UAB CTIP) (Mycoplasma pulmonis).